A 1233-amino-acid chain; its full sequence is uncharacterized protein (1233 aa).

Disordered regions lie at residues Met1–Asn39, Gln65–Ser116, Ala160–Ser211, Glu250–Arg577, Asp594–Lys825, Asn851–Lys872, and Glu902–Lys955. Positions Lys72–Asn83 are enriched in basic residues. Residue Ser180 is modified to Phosphoserine. Over residues Thr183–Arg199 the composition is skewed to basic residues. The segment covering Ser201–Ser211 has biased composition (polar residues). 2 stretches are compositionally biased toward basic and acidic residues: residues Glu250–Ser280 and Asn287–Asn300. A compositionally biased stretch (polar residues) spans Gly329–Gly345. 2 stretches are compositionally biased toward basic and acidic residues: residues Lys349 to Gly370 and Asn379 to Val408. Residues Asn409–Gly422 show a composition bias toward polar residues. Ser462 carries the post-translational modification Phosphoserine. The span at Glu466–Asn478 shows a compositional bias: acidic residues. Basic and acidic residues-rich tracts occupy residues Val484 to Arg497, Ser508 to Glu527, Asp594 to Ala622, Glu631 to Glu672, and Arg684 to Pro711. Ser523 carries the phosphoserine modification. Polar residues predominate over residues Gln728–Thr739. A compositionally biased stretch (basic and acidic residues) spans Phe753–Ala783. Acidic residues predominate over residues Glu855–Glu868. Residue Thr861 is modified to Phosphothreonine. 2 stretches are compositionally biased toward basic and acidic residues: residues Ser910–Glu920 and Glu935–Asp948. Position 975 is a phosphoserine (Ser975). Disordered stretches follow at residues Leu984 to Ala1071 and Lys1109 to Asp1128. Basic and acidic residues predominate over residues Glu986–Asp999. 2 positions are modified to phosphoserine: Ser1037 and Ser1046. Composition is skewed to basic and acidic residues over residues Gln1062 to Ala1071 and Gln1118 to Gln1127. The Glutaredoxin domain occupies Thr1132 to Ile1233.

This is an uncharacterized protein from Saccharomyces cerevisiae (strain ATCC 204508 / S288c) (Baker's yeast).